A 117-amino-acid chain; its full sequence is Large ribosomal subunit protein bL31B (117 aa).

The segment at 75–117 is disordered; that stretch reads KRFERKKEASPADTPPESDSTTENASVEKKAEKKRVTAKGSKK. Residues 100-109 are compositionally biased toward basic and acidic residues; sequence SVEKKAEKKR.

It belongs to the bacterial ribosomal protein bL31 family. Type B subfamily. As to quaternary structure, part of the 50S ribosomal subunit.

The polypeptide is Large ribosomal subunit protein bL31B (Protochlamydia amoebophila (strain UWE25)).